Here is a 188-residue protein sequence, read N- to C-terminus: Nicotinamide-nucleotide adenylyltransferase (188 aa).

Residues 166 to 188 (SDSLERYAATGESLPESLDDLDD) are disordered.

The protein belongs to the archaeal NMN adenylyltransferase family.

It is found in the cytoplasm. The catalysed reaction is beta-nicotinamide D-ribonucleotide + ATP + H(+) = diphosphate + NAD(+). It functions in the pathway cofactor biosynthesis; NAD(+) biosynthesis; NAD(+) from nicotinamide D-ribonucleotide: step 1/1. The protein is Nicotinamide-nucleotide adenylyltransferase of Haloarcula marismortui (strain ATCC 43049 / DSM 3752 / JCM 8966 / VKM B-1809) (Halobacterium marismortui).